A 287-amino-acid polypeptide reads, in one-letter code: MEMO1 family protein MJ0403 (287 aa).

The protein belongs to the MEMO1 family.

This is MEMO1 family protein MJ0403 from Methanocaldococcus jannaschii (strain ATCC 43067 / DSM 2661 / JAL-1 / JCM 10045 / NBRC 100440) (Methanococcus jannaschii).